We begin with the raw amino-acid sequence, 95 residues long: MSIDIETARRVAHLARIRVDEADLPALAGELSGILTFMEQLNEVDVEGVEPMTSVTPMRLKRRQDVVTDGDMQDKVLANAPDAREGFFAVPKVVE.

Belongs to the GatC family. In terms of assembly, heterotrimer of A, B and C subunits.

It catalyses the reaction L-glutamyl-tRNA(Gln) + L-glutamine + ATP + H2O = L-glutaminyl-tRNA(Gln) + L-glutamate + ADP + phosphate + H(+). The catalysed reaction is L-aspartyl-tRNA(Asn) + L-glutamine + ATP + H2O = L-asparaginyl-tRNA(Asn) + L-glutamate + ADP + phosphate + 2 H(+). In terms of biological role, allows the formation of correctly charged Asn-tRNA(Asn) or Gln-tRNA(Gln) through the transamidation of misacylated Asp-tRNA(Asn) or Glu-tRNA(Gln) in organisms which lack either or both of asparaginyl-tRNA or glutaminyl-tRNA synthetases. The reaction takes place in the presence of glutamine and ATP through an activated phospho-Asp-tRNA(Asn) or phospho-Glu-tRNA(Gln). This is Aspartyl/glutamyl-tRNA(Asn/Gln) amidotransferase subunit C from Cereibacter sphaeroides (strain ATCC 17025 / ATH 2.4.3) (Rhodobacter sphaeroides).